A 306-amino-acid polypeptide reads, in one-letter code: Non-structural protein 3 (306 aa).

This is Non-structural protein 3 (Segment-7) from Banna virus (BAV).